The chain runs to 316 residues: Probable cell division protein WhiA (316 aa).

Residues threonine 275–alanine 309 constitute a DNA-binding region (H-T-H motif).

The protein belongs to the WhiA family.

In terms of biological role, involved in cell division and chromosome segregation. The protein is Probable cell division protein WhiA of Bacillus cereus (strain B4264).